We begin with the raw amino-acid sequence, 80 residues long: Cell division protein ZapB (80 aa).

Residues 3–80 (LEILEQLEAK…GLLGKMEEVE (78 aa)) adopt a coiled-coil conformation. The interval 41–62 (LEQANNGRSEVEQEAQKARDEQ) is disordered. Positions 49–62 (SEVEQEAQKARDEQ) are enriched in basic and acidic residues.

The protein belongs to the ZapB family. As to quaternary structure, homodimer. The ends of the coiled-coil dimer bind to each other, forming polymers. Interacts with FtsZ.

It is found in the cytoplasm. Functionally, non-essential, abundant cell division factor that is required for proper Z-ring formation. It is recruited early to the divisome by direct interaction with FtsZ, stimulating Z-ring assembly and thereby promoting cell division earlier in the cell cycle. Its recruitment to the Z-ring requires functional FtsA or ZipA. The protein is Cell division protein ZapB of Aliivibrio salmonicida (strain LFI1238) (Vibrio salmonicida (strain LFI1238)).